A 135-amino-acid polypeptide reads, in one-letter code: Endocuticle structural glycoprotein SgAbd-2 (135 aa).

At Gln1 the chain carries Pyrrolidone carboxylic acid. 2 O-linked (HexNAc...) threonine glycosylation sites follow: Thr11 and Thr100. One can recognise a Chitin-binding type R&amp;R domain in the interval 32 to 102; sequence DGSYAYSYQT…AEGAHLPTPP (71 aa).

Its function is as follows. Component of the abdominal endocuticle. The protein is Endocuticle structural glycoprotein SgAbd-2 of Schistocerca gregaria (Desert locust).